Here is a 763-residue protein sequence, read N- to C-terminus: Phosphoglycerol transferase I (763 aa).

The next 4 membrane-spanning stretches (helical) occupy residues 1-21 (MSELLSVALFLASVLIYAWKA), 26-46 (WWFAATLTVLGLFVILNITLY), 77-97 (ILPGIGIALALVAVFGALGWI), and 108-128 (VGYSLLALLLALGSVDASPAF).

This sequence belongs to the OpgB family.

Its subcellular location is the cell inner membrane. The enzyme catalyses a phosphatidylglycerol + a membrane-derived-oligosaccharide D-glucose = a 1,2-diacyl-sn-glycerol + a membrane-derived-oligosaccharide 6-(glycerophospho)-D-glucose.. Its pathway is glycan metabolism; osmoregulated periplasmic glucan (OPG) biosynthesis. In terms of biological role, transfers a phosphoglycerol residue from phosphatidylglycerol to the membrane-bound nascent glucan backbones. The chain is Phosphoglycerol transferase I from Salmonella agona (strain SL483).